The primary structure comprises 1094 residues: Carbamoyl phosphate synthase large chain (1094 aa).

Residues 1–402 (MPRRSDLHRI…AFQKALRALE (402 aa)) form a carboxyphosphate synthetic domain region. ATP is bound by residues R129, R169, G175, G176, R208, L210, E215, G241, V242, H243, Q285, and E299. The region spanning 133 to 328 (GEAMEKIGLR…IARIGAKLAV (196 aa)) is the ATP-grasp 1 domain. Mg(2+) contacts are provided by Q285, E299, and N301. Mn(2+)-binding residues include Q285, E299, and N301. Positions 403–552 (TGRSGWTIAE…YLYGNYDEES (150 aa)) are oligomerization domain. Residues 553–936 (EAATEGRKKV…AFMKSQLAAD (384 aa)) form a carbamoyl phosphate synthetic domain region. In terms of domain architecture, ATP-grasp 2 spans 679–870 (EAIARELGIE…LPSVAARLML (192 aa)). ATP-binding residues include R715, R754, L756, E761, G786, I787, H788, S789, Q829, and E841. 3 residues coordinate Mg(2+): Q829, E841, and N843. The Mn(2+) site is built by Q829, E841, and N843. Residues 937–1077 (NALPREGTVF…QEWHEILRAP (141 aa)) form the MGS-like domain. The tract at residues 937–1094 (NALPREGTVF…AGSTQPAGVA (158 aa)) is allosteric domain.

The protein belongs to the CarB family. As to quaternary structure, composed of two chains; the small (or glutamine) chain promotes the hydrolysis of glutamine to ammonia, which is used by the large (or ammonia) chain to synthesize carbamoyl phosphate. Tetramer of heterodimers (alpha,beta)4. Mg(2+) serves as cofactor. The cofactor is Mn(2+).

It carries out the reaction hydrogencarbonate + L-glutamine + 2 ATP + H2O = carbamoyl phosphate + L-glutamate + 2 ADP + phosphate + 2 H(+). The enzyme catalyses hydrogencarbonate + NH4(+) + 2 ATP = carbamoyl phosphate + 2 ADP + phosphate + 2 H(+). The protein operates within amino-acid biosynthesis; L-arginine biosynthesis; carbamoyl phosphate from bicarbonate: step 1/1. Its pathway is pyrimidine metabolism; UMP biosynthesis via de novo pathway; (S)-dihydroorotate from bicarbonate: step 1/3. Large subunit of the glutamine-dependent carbamoyl phosphate synthetase (CPSase). CPSase catalyzes the formation of carbamoyl phosphate from the ammonia moiety of glutamine, carbonate, and phosphate donated by ATP, constituting the first step of 2 biosynthetic pathways, one leading to arginine and/or urea and the other to pyrimidine nucleotides. The large subunit (synthetase) binds the substrates ammonia (free or transferred from glutamine from the small subunit), hydrogencarbonate and ATP and carries out an ATP-coupled ligase reaction, activating hydrogencarbonate by forming carboxy phosphate which reacts with ammonia to form carbamoyl phosphate. In Gemmatimonas aurantiaca (strain DSM 14586 / JCM 11422 / NBRC 100505 / T-27), this protein is Carbamoyl phosphate synthase large chain.